The chain runs to 96 residues: Small ribosomal subunit protein bS6 (96 aa).

It belongs to the bacterial ribosomal protein bS6 family.

Functionally, binds together with bS18 to 16S ribosomal RNA. This Synechococcus sp. (strain JA-2-3B'a(2-13)) (Cyanobacteria bacterium Yellowstone B-Prime) protein is Small ribosomal subunit protein bS6.